A 944-amino-acid polypeptide reads, in one-letter code: Ras guanine nucleotide exchange factor O (944 aa).

Residues Cys-16 to Lys-54 form an RING-type zinc finger. The disordered stretch occupies residues Asn-80–Arg-102. Residues Asn-152–Leu-192 form a B box-type zinc finger. The Zn(2+) site is built by Cys-157, His-160, Cys-179, and His-184. 2 coiled-coil regions span residues Lys-200–Ser-234 and Ala-271–Asp-303. Residues Glu-402–Pro-528 enclose the N-terminal Ras-GEF domain. Disordered regions lie at residues Ile-530–Thr-562, Thr-587–Ser-623, and Glu-644–Ser-670. Residues Gly-590 to Gln-604 show a composition bias toward polar residues. Low complexity-rich tracts occupy residues Ser-605–Ser-623 and Asn-648–Ser-670. The Ras-GEF domain occupies Asp-727 to Leu-944.

In terms of biological role, promotes the exchange of Ras-bound GDP by GTP. This chain is Ras guanine nucleotide exchange factor O (gefO), found in Dictyostelium discoideum (Social amoeba).